Reading from the N-terminus, the 708-residue chain is Fatty acid oxidation complex subunit alpha (708 aa).

Positions 1–190 are enoyl-CoA hydratase; the sequence is MSQDKAFTME…KAGLVTEVVP (190 aa). The segment at 310 to 708 is 3-hydroxyacyl-CoA dehydrogenase; the sequence is DSVKRVGVLG…MLENGWNFYQ (399 aa).

The protein in the N-terminal section; belongs to the enoyl-CoA hydratase/isomerase family. It in the central section; belongs to the 3-hydroxyacyl-CoA dehydrogenase family. Heterotetramer of two alpha chains (FadJ) and two beta chains (FadI).

It is found in the cytoplasm. The catalysed reaction is a (3S)-3-hydroxyacyl-CoA = a (2E)-enoyl-CoA + H2O. It carries out the reaction a 4-saturated-(3S)-3-hydroxyacyl-CoA = a (3E)-enoyl-CoA + H2O. It catalyses the reaction a (3S)-3-hydroxyacyl-CoA + NAD(+) = a 3-oxoacyl-CoA + NADH + H(+). The enzyme catalyses (3S)-3-hydroxybutanoyl-CoA = (3R)-3-hydroxybutanoyl-CoA. The protein operates within lipid metabolism; fatty acid beta-oxidation. Catalyzes the formation of a hydroxyacyl-CoA by addition of water on enoyl-CoA. Also exhibits 3-hydroxyacyl-CoA epimerase and 3-hydroxyacyl-CoA dehydrogenase activities. The chain is Fatty acid oxidation complex subunit alpha from Idiomarina loihiensis (strain ATCC BAA-735 / DSM 15497 / L2-TR).